The chain runs to 252 residues: 5-oxoprolinase subunit A (252 aa).

Belongs to the LamB/PxpA family. Forms a complex composed of PxpA, PxpB and PxpC.

The enzyme catalyses 5-oxo-L-proline + ATP + 2 H2O = L-glutamate + ADP + phosphate + H(+). Catalyzes the cleavage of 5-oxoproline to form L-glutamate coupled to the hydrolysis of ATP to ADP and inorganic phosphate. In Photorhabdus laumondii subsp. laumondii (strain DSM 15139 / CIP 105565 / TT01) (Photorhabdus luminescens subsp. laumondii), this protein is 5-oxoprolinase subunit A.